The sequence spans 461 residues: Lysosomal proton-coupled steroid conjugate and bile acid symporter SLC46A3 (461 aa).

The signal sequence occupies residues 1–25; that stretch reads MKILFVEPAIFLSAFAMTLTGPLTT. Topologically, residues 26-73 are extracellular; it reads QYVYRRIWEETGNYTFSSDSNISECEKNKSSPIFAFQEEVQKKVSRFN. N-linked (GlcNAc...) asparagine glycans are attached at residues Asn38, Asn46, and Asn53. Residues 74–94 traverse the membrane as a helical segment; it reads LQMDISGLIPGLVSTFILLSI. Residues 95–101 lie on the Cytoplasmic side of the membrane; it reads SDHYGRK. Residues 102-124 traverse the membrane as a helical segment; sequence FPMILSSVGALATSVWLCLLCYF. At 125-133 the chain is on the extracellular side; that stretch reads AFPFQLLIA. Residues 134–156 form a helical membrane-spanning segment; that stretch reads STFIGAFCGNYTTFWGACFAYIV. The Cytoplasmic portion of the chain corresponds to 157–170; the sequence is DQCKEHKQKTIRIA. Residues 171-191 form a helical membrane-spanning segment; that stretch reads IIDFLLGLVTGLTGLSSGYFI. Topologically, residues 192-197 are extracellular; that stretch reads RELGFE. Residues 198–218 form a helical membrane-spanning segment; the sequence is WSFLIIAVSLAVNLIYILFFL. Topologically, residues 219–261 are cytoplasmic; sequence GDPVKECSSQNVTMSCSEGFKNLFYRTYMLFKNASGKRRFLLC. The helical transmembrane segment at 262–282 threads the bilayer; that stretch reads LLLFTVITYFFVVIGIAPIFI. The Extracellular portion of the chain corresponds to 283–294; that stretch reads LYELDSPLCWNE. A helical transmembrane segment spans residues 295 to 315; the sequence is VFIGYGSALGSASFLTSFLGI. At 316–324 the chain is on the cytoplasmic side; the sequence is WLFSYCMED. Residues 325–345 form a helical membrane-spanning segment; that stretch reads IHMAFIGIFTTMTGMAMTAFA. Residues 346–347 are Extracellular-facing; sequence ST. Residues 348–368 traverse the membrane as a helical segment; it reads TLMMFLARVPFLFTIVPFSVL. Topologically, residues 369 to 382 are cytoplasmic; that stretch reads RSMLSKVVRSTEQG. A helical transmembrane segment spans residues 383–403; the sequence is TLFACIAFLETLGGVTAVSTF. Topologically, residues 404–415 are extracellular; sequence NGIYSATVAWYP. The chain crosses the membrane as a helical span at residues 416 to 436; it reads GFTFLLSAGLLLLPAISLCVV. Topologically, residues 437–461 are cytoplasmic; that stretch reads KCTSWNEGSYELLIQEESSEDASDR. The Tyrosine-based lysosomal-sorting motif signature appears at 446 to 449; it reads YELL.

The protein belongs to the major facilitator superfamily. SLC46A family.

It localises to the lysosome membrane. The catalysed reaction is estrone 3-sulfate(out) + n H(+)(out) = estrone 3-sulfate(in) + n H(+)(in). It catalyses the reaction 25-hydroxyvitamin D3 sulfate(out) + n H(+)(out) = 25-hydroxyvitamin D3 sulfate(in) + n H(+)(in). It carries out the reaction cholate(out) + n H(+)(out) = cholate(in) + n H(+)(in). The enzyme catalyses glycocholate(out) + n H(+)(out) = glycocholate(in) + n H(+)(in). The catalysed reaction is taurocholate(out) + n H(+)(out) = taurocholate(in) + n H(+)(in). It catalyses the reaction dehydroepiandrosterone 3-sulfate(out) + n H(+)(out) = dehydroepiandrosterone 3-sulfate(in) + n H(+)(in). It carries out the reaction N-acetyl-D-muramoyl-L-alanyl-D-isoglutamine(out) + n H(+)(out) = N-acetyl-D-muramoyl-L-alanyl-D-isoglutamine(in) + n H(+)(in). The enzyme catalyses 2',3'-cGAMP(out) + n H(+)(out) = 2',3'-cGAMP(in) + n H(+)(in). Its function is as follows. Lysosomal proton-coupled steroid conjugate and bile acid transporter. Preferentially recognizes lipophilic steroid conjugates or bile acis as endogenous substrates and seems to mediate escape from lysosomes to the cytoplasm. Modulates hepatic cytosolic copper homeostasis, maybe acting as a lysosomal copper transporter and sequestering copper ions in the lysosome. Transports catabolites of non-cleavable antibody-drug conjugates from the lysosome to the cytoplasm. Delivers pathogen-associated molecular patterns to cytosolic pattern recognition receptors as part of the innate immune response to microbes. Selectively transports bacterial muramyl dipeptide (MDP) into the cytosol for recognition by NOD2, triggering inflammatory responses. Likely acts as a redundant importer of cyclic GMP-AMP dinucleotides (cGAMPs) in monocyte and macrophage cell lineages. The transport mechanism, its electrogenicity and stoichiometry remain to be elucidated. The chain is Lysosomal proton-coupled steroid conjugate and bile acid symporter SLC46A3 from Homo sapiens (Human).